A 725-amino-acid polypeptide reads, in one-letter code: Methionine--tRNA ligase (725 aa).

The short motif at 27–37 (PYANGQIHIGH) is the 'HIGH' region element. Residues cysteine 158, cysteine 161, cysteine 171, and cysteine 174 each contribute to the Zn(2+) site. Residues 348–352 (KMSKS) carry the 'KMSKS' region motif. Lysine 351 is an ATP binding site. Positions 619-725 (DFAKIDLRIA…SGAKPGMRVK (107 aa)) constitute a tRNA-binding domain.

The protein belongs to the class-I aminoacyl-tRNA synthetase family. MetG type 1 subfamily. As to quaternary structure, homodimer. Requires Zn(2+) as cofactor.

Its subcellular location is the cytoplasm. The enzyme catalyses tRNA(Met) + L-methionine + ATP = L-methionyl-tRNA(Met) + AMP + diphosphate. In terms of biological role, is required not only for elongation of protein synthesis but also for the initiation of all mRNA translation through initiator tRNA(fMet) aminoacylation. The polypeptide is Methionine--tRNA ligase (Burkholderia mallei (strain NCTC 10247)).